A 62-amino-acid chain; its full sequence is Bowman-Birk type proteinase inhibitor (62 aa).

Disulfide bonds link Cys8/Cys61, Cys9/Cys24, Cys12/Cys57, Cys14/Cys22, Cys31/Cys38, Cys35/Cys50, and Cys40/Cys48.

As to quaternary structure, forms a monomer at protein concentrations of below 1 mM. At concentrations of above 2 mM, self-associates.

Inhibits trypsin but not chymotrypsin. Inhibits the trypsin-like proteinase activity present in larvae of the crop pests Adoxophyes orana, Hyphantria cunea, Lobesia botrana and Ostrinia nubilalis. The polypeptide is Bowman-Birk type proteinase inhibitor (Medicago scutellata (Snail medic)).